The primary structure comprises 434 residues: MQVSVETTQGLERRLTISVPAEQIEKAVNDSLKNEAKRARIPGFRPGKVPVSVINKRYGKAIRQDITGEVMQRNFVEAIIAEKLNPAGAPTFVPGESDAENFQFVATFEIYPEVELKGLEDIAVEQPTSDVTDADVDTMIETLRKQHATYEAVERAAADGDKAKINFVGSIDGEEFEGGKAEDFELQLGSGRMIPGFESGVEGHKAGEEFDIEVTFPEDYHAENLKGKVAKFAITLNEVQAANLPEVNDEFATLFGVAEGGLEALKAEISKNMGRELEQALKANVKEQVLNGLLEQNEIELPASLIAGEVEVLRKQAMQRFGDQAANMPELPADLFTEQAERRVKVGLLLGEVIKTNELKAEEERVQGLIASMASAYEDPSEVVEYYNGNQEMMQNMRNVALEEQAVEALLKTAKVTEKAVNFEEFMNKATQQG.

Residues 160 to 245 (GDKAKINFVG…LNEVQAANLP (86 aa)) form the PPIase FKBP-type domain.

This sequence belongs to the FKBP-type PPIase family. Tig subfamily.

The protein resides in the cytoplasm. It catalyses the reaction [protein]-peptidylproline (omega=180) = [protein]-peptidylproline (omega=0). Involved in protein export. Acts as a chaperone by maintaining the newly synthesized protein in an open conformation. Functions as a peptidyl-prolyl cis-trans isomerase. The chain is Trigger factor from Shewanella woodyi (strain ATCC 51908 / MS32).